The following is a 506-amino-acid chain: Sporulation kinase D (506 aa).

Helical transmembrane passes span 17–37 (VKLY…FVYE) and 250–270 (LVLP…LVLY). The Histidine kinase domain occupies 298–505 (STAHEIRNPL…EVTITLPVSA (208 aa)). H301 is modified (phosphohistidine; by autocatalysis).

As to quaternary structure, oligomerizes, probably forms homodimers; oligomerization is assisted by FloT. Interacts with FloT.

The protein localises to the cell membrane. The enzyme catalyses ATP + protein L-histidine = ADP + protein N-phospho-L-histidine.. Phosphorylates the sporulation-regulatory protein spo0F and, to a minor extent, is responsible for heterogeneous expression of spo0A during logarithmical growth. Also phosphorylates spo0A under biofilm growth conditions. The protein is Sporulation kinase D (kinD) of Bacillus subtilis (strain 168).